We begin with the raw amino-acid sequence, 989 residues long: Phosphoenolpyruvate carboxylase (989 aa).

Catalysis depends on residues histidine 175 and lysine 630.

Belongs to the PEPCase type 1 family. Mg(2+) serves as cofactor.

The catalysed reaction is oxaloacetate + phosphate = phosphoenolpyruvate + hydrogencarbonate. Its function is as follows. Forms oxaloacetate, a four-carbon dicarboxylic acid source for the tricarboxylic acid cycle. In Prochlorococcus marinus (strain MIT 9312), this protein is Phosphoenolpyruvate carboxylase.